Reading from the N-terminus, the 576-residue chain is Formate--tetrahydrofolate ligase 1 (576 aa).

T69–T76 is a binding site for ATP.

It belongs to the formate--tetrahydrofolate ligase family.

It carries out the reaction (6S)-5,6,7,8-tetrahydrofolate + formate + ATP = (6R)-10-formyltetrahydrofolate + ADP + phosphate. It participates in one-carbon metabolism; tetrahydrofolate interconversion. The sequence is that of Formate--tetrahydrofolate ligase 1 from Rubrobacter xylanophilus (strain DSM 9941 / JCM 11954 / NBRC 16129 / PRD-1).